The primary structure comprises 102 residues: uncharacterized protein (102 aa).

The signal sequence occupies residues 1-41 (MLFLDSYSLLIQFQRFKNWESPRRFSSSFPLLLFVFKPIFA).

This is an uncharacterized protein from Saccharomyces cerevisiae (strain ATCC 204508 / S288c) (Baker's yeast).